An 807-amino-acid chain; its full sequence is Glycerol-3-phosphate acyltransferase (807 aa).

The HXXXXD motif motif lies at 308-313; that stretch reads CHRSHM.

The protein belongs to the GPAT/DAPAT family.

Its subcellular location is the cell inner membrane. It carries out the reaction sn-glycerol 3-phosphate + an acyl-CoA = a 1-acyl-sn-glycero-3-phosphate + CoA. The protein operates within phospholipid metabolism; CDP-diacylglycerol biosynthesis; CDP-diacylglycerol from sn-glycerol 3-phosphate: step 1/3. In Shewanella pealeana (strain ATCC 700345 / ANG-SQ1), this protein is Glycerol-3-phosphate acyltransferase.